The primary structure comprises 282 residues: Pantothenate synthetase (282 aa).

Residue 30–37 (MGALHAGH) participates in ATP binding. The active-site Proton donor is His-37. Gln-61 provides a ligand contact to (R)-pantoate. Position 61 (Gln-61) interacts with beta-alanine. 147-150 (GEKD) contributes to the ATP binding site. Gln-153 is a binding site for (R)-pantoate. Residues Val-177 and 185–188 (LSSR) each bind ATP.

Belongs to the pantothenate synthetase family. As to quaternary structure, homodimer.

Its subcellular location is the cytoplasm. It catalyses the reaction (R)-pantoate + beta-alanine + ATP = (R)-pantothenate + AMP + diphosphate + H(+). The protein operates within cofactor biosynthesis; (R)-pantothenate biosynthesis; (R)-pantothenate from (R)-pantoate and beta-alanine: step 1/1. Catalyzes the condensation of pantoate with beta-alanine in an ATP-dependent reaction via a pantoyl-adenylate intermediate. The polypeptide is Pantothenate synthetase (Phocaeicola vulgatus (strain ATCC 8482 / DSM 1447 / JCM 5826 / CCUG 4940 / NBRC 14291 / NCTC 11154) (Bacteroides vulgatus)).